The chain runs to 97 residues: Aspartyl/glutamyl-tRNA(Asn/Gln) amidotransferase subunit C (97 aa).

It belongs to the GatC family. As to quaternary structure, heterotrimer of A, B and C subunits.

The catalysed reaction is L-glutamyl-tRNA(Gln) + L-glutamine + ATP + H2O = L-glutaminyl-tRNA(Gln) + L-glutamate + ADP + phosphate + H(+). The enzyme catalyses L-aspartyl-tRNA(Asn) + L-glutamine + ATP + H2O = L-asparaginyl-tRNA(Asn) + L-glutamate + ADP + phosphate + 2 H(+). Its function is as follows. Allows the formation of correctly charged Asn-tRNA(Asn) or Gln-tRNA(Gln) through the transamidation of misacylated Asp-tRNA(Asn) or Glu-tRNA(Gln) in organisms which lack either or both of asparaginyl-tRNA or glutaminyl-tRNA synthetases. The reaction takes place in the presence of glutamine and ATP through an activated phospho-Asp-tRNA(Asn) or phospho-Glu-tRNA(Gln). The sequence is that of Aspartyl/glutamyl-tRNA(Asn/Gln) amidotransferase subunit C from Listeria monocytogenes serotype 4b (strain CLIP80459).